A 161-amino-acid chain; its full sequence is Arachidonate 5-lipoxygenase-activating protein (161 aa).

The Lumenal segment spans residues 1-8 (MDQEAVGN). A helical membrane pass occupies residues 9-30 (VVLLAIVTLISVVQNAFFAHKV). Residues 31-52 (ELESKAQSGRSFQRTGTLAFER) are Cytoplasmic-facing. Residues 53-77 (VYTANQNCVDAYPTFLVVLWTAGLL) form a helical membrane-spanning segment. Topologically, residues 78-80 (CSQ) are lumenal. A helical transmembrane segment spans residues 81 to 102 (VPAAFAGLMYLFVRQKYFVGYL). Over 103-107 (GERTQ) the chain is Cytoplasmic. An intramembrane segment occupies 108–115 (STPGYIFG). The chain crosses the membrane as a helical span at residues 116–128 (KRIILFLFLMSLA). Residues 129–161 (GILNHYLIFFFGSDFENYIRTITTTISPLLLIP) are Lumenal-facing.

The protein belongs to the MAPEG family. In terms of assembly, homotrimer. Interacts with LTC4S and ALOX5.

It localises to the nucleus membrane. It is found in the endoplasmic reticulum membrane. In terms of biological role, required for leukotriene biosynthesis by ALOX5 (5-lipoxygenase). Anchors ALOX5 to the membrane. Binds arachidonic acid, and could play an essential role in the transfer of arachidonic acid to ALOX5. Binds to MK-886, a compound that blocks the biosynthesis of leukotrienes. In Rattus norvegicus (Rat), this protein is Arachidonate 5-lipoxygenase-activating protein (Alox5ap).